A 398-amino-acid polypeptide reads, in one-letter code: Lipase member N (398 aa).

An N-terminal signal peptide occupies residues 1-18 (MMWLLLTTTCLICGTLNA). Positions 79 to 379 (PVVYMQHALF…DWNHFDFVWG (301 aa)) constitute an AB hydrolase-1 domain. Serine 173 serves as the catalytic Nucleophile. A disulfide bond links cysteine 247 and cysteine 256. N-linked (GlcNAc...) asparagine glycosylation occurs at asparagine 272. Active-site charge relay system residues include aspartate 344 and histidine 373.

This sequence belongs to the AB hydrolase superfamily. Lipase family. In terms of tissue distribution, highly expressed in the epidermis in the granular keratinocytes. Also detected in other tissues, although at much lower levels, including lung and spleen.

The protein resides in the secreted. It catalyses the reaction a sterol ester + H2O = a sterol + a fatty acid + H(+). The catalysed reaction is a triacylglycerol + H2O = a 1,2-diacylglycerol + a fatty acid + H(+). The enzyme catalyses a triacylglycerol + H2O = a diacylglycerol + a fatty acid + H(+). It carries out the reaction a cholesterol ester + H2O = cholesterol + a fatty acid + H(+). Functionally, plays a highly specific role in the last step of keratinocyte differentiation. Contains two distinct domains: the alpha/beta hydrolase fold and the abhydrolase-associated lipase region, also features the consensus sequence of the active site of a genuine lipase. May have an essential function in lipid metabolism of the most differentiated epidermal layers. The polypeptide is Lipase member N (LIPN) (Homo sapiens (Human)).